We begin with the raw amino-acid sequence, 309 residues long: MEMO1 family protein C4H3.04c (309 aa).

It belongs to the MEMO1 family.

The protein is MEMO1 family protein C4H3.04c of Schizosaccharomyces pombe (strain 972 / ATCC 24843) (Fission yeast).